The chain runs to 438 residues: MDGVSNWPAPSTPTPVHATLTIPGSKSQTNRALVLAALATPQGTSTISGALRSRDTDLMIGALQTLGFDVESVGTDSDLRVGGGLAPAAGARVDCGLAGTVLRFLPPVAALSTETVEFDGDEQARARPIAPLLAGLQSLGVRIDGDGLPFRVRGEGSVAGGTVEIDASASSQFVSGLMLSGALFRDGLTIVHTGESVPSAPHVAMTVSMLRDAGVEVDDTETNRWTVRPGRVAARHWTIEPDLSNAVPFLSAGVVSGGAVRVTGWPAVSTQPAAAIMAILEKVGAVVRQSESYLEVQGTRQYQGFDVDLHDVGELTPAVAALAAVATPGAVSRLRGVAHLRGHETDRLAALSAEINGLGGQCEETADGLVITAAPLHGGVWHSYADHRMAMAGAIVGLRTPGVEIEDIATTAKTLPEFPQMWADMLAGQTATDPEAGA.

Residues Lys26, Ser27, and Arg31 each contribute to the 3-phosphoshikimate site. Lys26 is a binding site for phosphoenolpyruvate. 2 residues coordinate phosphoenolpyruvate: Gly99 and Arg127. Residues Ser170, Ser171, Gln172, Ser199, Glu314, and His343 each contribute to the 3-phosphoshikimate site. Phosphoenolpyruvate is bound at residue Gln172. Glu314 (proton acceptor) is an active-site residue. Positions 347, 388, and 413 each coordinate phosphoenolpyruvate.

This sequence belongs to the EPSP synthase family. As to quaternary structure, monomer.

It is found in the cytoplasm. The enzyme catalyses 3-phosphoshikimate + phosphoenolpyruvate = 5-O-(1-carboxyvinyl)-3-phosphoshikimate + phosphate. The protein operates within metabolic intermediate biosynthesis; chorismate biosynthesis; chorismate from D-erythrose 4-phosphate and phosphoenolpyruvate: step 6/7. In terms of biological role, catalyzes the transfer of the enolpyruvyl moiety of phosphoenolpyruvate (PEP) to the 5-hydroxyl of shikimate-3-phosphate (S3P) to produce enolpyruvyl shikimate-3-phosphate and inorganic phosphate. The sequence is that of 3-phosphoshikimate 1-carboxyvinyltransferase from Mycobacterium sp. (strain JLS).